Reading from the N-terminus, the 675-residue chain is Methionine--tRNA ligase (675 aa).

The 'HIGH' region signature appears at 15–25; that stretch reads PYANGSIHLGH. Positions 146, 149, 159, and 162 each coordinate Zn(2+). The 'KMSKS' region motif lies at 332 to 336; the sequence is KMSKS. Residue Lys335 participates in ATP binding. The tRNA-binding domain occupies 573-675; sequence DFAKVDMRIA…SGAQPGMQVK (103 aa).

It belongs to the class-I aminoacyl-tRNA synthetase family. MetG type 1 subfamily. As to quaternary structure, homodimer. Zn(2+) is required as a cofactor.

The protein localises to the cytoplasm. It catalyses the reaction tRNA(Met) + L-methionine + ATP = L-methionyl-tRNA(Met) + AMP + diphosphate. Its function is as follows. Is required not only for elongation of protein synthesis but also for the initiation of all mRNA translation through initiator tRNA(fMet) aminoacylation. The sequence is that of Methionine--tRNA ligase from Yersinia pestis bv. Antiqua (strain Angola).